Reading from the N-terminus, the 189-residue chain is uncharacterized protein (189 aa).

Belongs to the OsmC/Ohr family.

This is an uncharacterized protein from Methanocaldococcus jannaschii (strain ATCC 43067 / DSM 2661 / JAL-1 / JCM 10045 / NBRC 100440) (Methanococcus jannaschii).